Consider the following 255-residue polypeptide: Taurine import ATP-binding protein TauB (255 aa).

Residues L2–A229 form the ABC transporter domain. G34 to T41 contacts ATP.

The protein belongs to the ABC transporter superfamily. Taurine importer (TC 3.A.1.17.1) family. In terms of assembly, the complex is composed of two ATP-binding proteins (TauB), two transmembrane proteins (TauC) and a solute-binding protein (TauA).

Its subcellular location is the cell inner membrane. The catalysed reaction is taurine(out) + ATP + H2O = taurine(in) + ADP + phosphate + H(+). Part of the ABC transporter complex TauABC involved in taurine import. Responsible for energy coupling to the transport system. This chain is Taurine import ATP-binding protein TauB, found in Yersinia pseudotuberculosis serotype I (strain IP32953).